The sequence spans 161 residues: Nucleotide-binding protein LHK_01423 (161 aa).

The protein belongs to the YajQ family.

Nucleotide-binding protein. In Laribacter hongkongensis (strain HLHK9), this protein is Nucleotide-binding protein LHK_01423.